Reading from the N-terminus, the 351-residue chain is UPF0421 protein BC_2748 (351 aa).

The next 4 membrane-spanning stretches (helical) occupy residues 19–39 (IAVF…IFAV), 74–94 (FTFF…FTIV), 109–129 (TLTA…AFLI), and 131–151 (LATT…IFPP).

This sequence belongs to the UPF0421 family.

It localises to the cell membrane. In Bacillus cereus (strain ATCC 14579 / DSM 31 / CCUG 7414 / JCM 2152 / NBRC 15305 / NCIMB 9373 / NCTC 2599 / NRRL B-3711), this protein is UPF0421 protein BC_2748.